A 194-amino-acid polypeptide reads, in one-letter code: Translationally-controlled tumor protein homolog 2 (194 aa).

The 194-residue stretch at Met-1–Val-194 folds into the TCTP domain.

It belongs to the TCTP family.

The protein resides in the cytoplasm. Involved in calcium binding and microtubule stabilization. In Dictyostelium discoideum (Social amoeba), this protein is Translationally-controlled tumor protein homolog 2.